Consider the following 93-residue polypeptide: Small ribosomal subunit protein uS19 (93 aa).

This sequence belongs to the universal ribosomal protein uS19 family.

Protein S19 forms a complex with S13 that binds strongly to the 16S ribosomal RNA. This chain is Small ribosomal subunit protein uS19, found in Latilactobacillus sakei subsp. sakei (strain 23K) (Lactobacillus sakei subsp. sakei).